Here is a 152-residue protein sequence, read N- to C-terminus: CASP-like protein 5C1 (152 aa).

Residues 1–12 lie on the Cytoplasmic side of the membrane; that stretch reads MVRTTASFGTSS. The helical transmembrane segment at 13 to 33 threads the bilayer; it reads SFVLRLGQTLFSSASLLFMCF. Over 34-44 the chain is Extracellular; that stretch reads NDDEDFYAYTT. Residues 45-65 form a helical membrane-spanning segment; sequence FCYLVTVMGLVTPWSVTLALM. Topologically, residues 66-80 are cytoplasmic; that stretch reads EAYSILVKKLPMQAT. A helical transmembrane segment spans residues 81 to 101; that stretch reads VISVIVAGDFVLSFLSLGGAC. The Extracellular segment spans residues 102 to 126; that stretch reads STASVAVLLMDAGEKQCDRYKLSAT. The chain crosses the membrane as a helical span at residues 127–147; it reads MAFLSSFLSFASTFFNFCLLP. The Cytoplasmic segment spans residues 148 to 152; the sequence is SLMSH.

It belongs to the Casparian strip membrane proteins (CASP) family. As to quaternary structure, homodimer and heterodimers.

The protein resides in the cell membrane. This Arabidopsis thaliana (Mouse-ear cress) protein is CASP-like protein 5C1.